A 294-amino-acid polypeptide reads, in one-letter code: 1D-myo-inositol 2-acetamido-2-deoxy-alpha-D-glucopyranoside deacetylase (294 aa).

Zn(2+) contacts are provided by H15, D18, and H150.

The protein belongs to the MshB deacetylase family. The cofactor is Zn(2+).

The enzyme catalyses 1D-myo-inositol 2-acetamido-2-deoxy-alpha-D-glucopyranoside + H2O = 1D-myo-inositol 2-amino-2-deoxy-alpha-D-glucopyranoside + acetate. Catalyzes the deacetylation of 1D-myo-inositol 2-acetamido-2-deoxy-alpha-D-glucopyranoside (GlcNAc-Ins) in the mycothiol biosynthesis pathway. In Streptomyces avermitilis (strain ATCC 31267 / DSM 46492 / JCM 5070 / NBRC 14893 / NCIMB 12804 / NRRL 8165 / MA-4680), this protein is 1D-myo-inositol 2-acetamido-2-deoxy-alpha-D-glucopyranoside deacetylase.